A 495-amino-acid chain; its full sequence is REST corepressor 3 (495 aa).

Residues 1 to 83 (MRVGAEYQAR…KSLADLPNFT (83 aa)) form the ELM2 domain. A Glycyl lysine isopeptide (Lys-Gly) (interchain with G-Cter in SUMO2) cross-link involves residue Lys-20. Residues 84–135 (PFPDEWTVEDKVLFEQAFSFHGKSFHRIQQMLPDKTIASLVKYYYSWKKTRS) form the SANT 1 domain. The interval 147–219 (LANRHNQGDS…SQRSKCRPPK (73 aa)) is disordered. Phosphoserine occurs at positions 156 and 171. Residues 162–184 (ETHPMDGNDSDYDPKKEAKKEGN) show a composition bias toward basic and acidic residues. A Glycyl lysine isopeptide (Lys-Gly) (interchain with G-Cter in SUMO2) cross-link involves residue Lys-193. Residues 205–217 (QHRHHSQRSKCRP) are compositionally biased toward basic residues. Residues 237–273 (AANTILRQLDMELISLKRQVQNAKQVNSALKQKMEGG) adopt a coiled-coil conformation. Lys-285 participates in a covalent cross-link: Glycyl lysine isopeptide (Lys-Gly) (interchain with G-Cter in SUMO2). Residues 285-336 (KINARWTTEEQLLAVQGVRKYGKDFQAIADVIGNKTVGQVKNFFVNYRRRFN) enclose the SANT 2 domain. Residues 346 to 495 (AEQGTQASNG…IQTDSQSSLH (150 aa)) form a disordered region. The span at 348 to 357 (QGTQASNGDA) shows a compositional bias: polar residues. At Thr-376 the chain carries Phosphothreonine. Positions 393 to 405 (PSPPAPSSTPTPT) are enriched in pro residues. The span at 419 to 428 (RPTLPAAPAL) shows a compositional bias: low complexity. Asymmetric dimethylarginine is present on residues Arg-445 and Arg-457. The span at 475–495 (VGGQQPPSLIGIQTDSQSSLH) shows a compositional bias: polar residues.

The protein belongs to the CoREST family.

Its subcellular location is the nucleus. Its function is as follows. May act as a component of a corepressor complex that represses transcription. The polypeptide is REST corepressor 3 (RCOR3) (Homo sapiens (Human)).